We begin with the raw amino-acid sequence, 211 residues long: Peptidyl-prolyl cis-trans isomerase FKBP14 (211 aa).

The N-terminal stretch at 1–19 (MRLFLWNAVLTLFVTSLIG) is a signal peptide. Residues Cys-38 and Cys-96 are joined by a disulfide bond. One can recognise a PPIase FKBP-type domain in the interval 45 to 135 (GDLMLVHYEG…IFNIDLLEIR (91 aa)). The EF-hand 1 domain maps to 135–170 (RNGPRSHESFQEMDLNDDWKLSKDEVKAYLKKEFEK). Ca(2+) is bound by residues Asp-148, Asn-150, Asp-152, Lys-154, and Glu-159. N-linked (GlcNAc...) asparagine glycosylation occurs at Asn-176. One can recognise an EF-hand 2 domain in the interval 179 to 211 (HHDALVEDIFDKEDEDKDGFISAREFTYKHDEL). Positions 192, 194, 196, 198, and 203 each coordinate Ca(2+). Residues 208–211 (HDEL) carry the Prevents secretion from ER motif.

Monomer. Homodimer. Interacts with type III, type IV and type X collagens.

The protein localises to the endoplasmic reticulum lumen. It carries out the reaction [protein]-peptidylproline (omega=180) = [protein]-peptidylproline (omega=0). With respect to regulation, inhibited by tacrolimus/FK506. Functionally, PPIase which accelerates the folding of proteins during protein synthesis. Has a preference for substrates containing 4-hydroxylproline modifications, including type III collagen. May also target type VI and type X collagens. The protein is Peptidyl-prolyl cis-trans isomerase FKBP14 (FKBP14) of Homo sapiens (Human).